We begin with the raw amino-acid sequence, 543 residues long: Vibriobactin-specific 2,3-dihydroxybenzoate-AMP ligase (543 aa).

Residues 240–259 form a helical membrane-spanning segment; sequence FPLSSPGALGVFWAGGCVVL.

It belongs to the ATP-dependent AMP-binding enzyme family.

Its subcellular location is the cell inner membrane. It catalyses the reaction 2,3-dihydroxybenzoate + holo-[ACP] + ATP = 2,3-dihydroxybenzoyl-[ACP] + AMP + diphosphate. Its pathway is siderophore biosynthesis; vibriobactin biosynthesis. In terms of biological role, activation of the carboxylate group of 2,3-dihydroxy-benzoate (DHB), via ATP-dependent PPi exchange reactions, to the acyladenylate, preparing that molecule for the final stages of vibriobactin synthesis. This chain is Vibriobactin-specific 2,3-dihydroxybenzoate-AMP ligase (vibE), found in Vibrio cholerae serotype O1 (strain ATCC 39315 / El Tor Inaba N16961).